The primary structure comprises 366 residues: Ribosomal RNA large subunit methyltransferase M (366 aa).

S-adenosyl-L-methionine contacts are provided by residues S188, C221–G224, D240, D260, and D277. K306 functions as the Proton acceptor in the catalytic mechanism.

Belongs to the class I-like SAM-binding methyltransferase superfamily. RNA methyltransferase RlmE family. RlmM subfamily. As to quaternary structure, monomer.

The protein resides in the cytoplasm. It catalyses the reaction cytidine(2498) in 23S rRNA + S-adenosyl-L-methionine = 2'-O-methylcytidine(2498) in 23S rRNA + S-adenosyl-L-homocysteine + H(+). In terms of biological role, catalyzes the 2'-O-methylation at nucleotide C2498 in 23S rRNA. In Pectobacterium carotovorum subsp. carotovorum (strain PC1), this protein is Ribosomal RNA large subunit methyltransferase M.